Reading from the N-terminus, the 336-residue chain is Aspartate--ammonia ligase (336 aa).

Belongs to the class-II aminoacyl-tRNA synthetase family. AsnA subfamily.

The protein resides in the cytoplasm. The enzyme catalyses L-aspartate + NH4(+) + ATP = L-asparagine + AMP + diphosphate + H(+). Its pathway is amino-acid biosynthesis; L-asparagine biosynthesis; L-asparagine from L-aspartate (ammonia route): step 1/1. In Ruminiclostridium cellulolyticum (strain ATCC 35319 / DSM 5812 / JCM 6584 / H10) (Clostridium cellulolyticum), this protein is Aspartate--ammonia ligase.